Consider the following 527-residue polypeptide: Mitogen-activated protein kinase kinae MKK2 (527 aa).

2 disordered regions span residues 1 to 143 and 156 to 189; these read MHDQ…SAGS and IGST…DKDG. Residues 107 to 129 are compositionally biased toward low complexity; that stretch reads QQGQSASGGSESSAAHSRSGSFG. The segment covering 134-143 has biased composition (polar residues); the sequence is RTSNPTSAGS. Positions 177–189 are enriched in basic and acidic residues; the sequence is ERSDGGAGMDKDG. The 271-residue stretch at 227-497 folds into the Protein kinase domain; it reads IVELGGLGEG…PWRMLEHPWM (271 aa). Residues 233–241 and Lys-256 contribute to the ATP site; that span reads LGEGAGGAV.

It belongs to the protein kinase superfamily. STE Ser/Thr protein kinase family. MAP kinase kinase subfamily. Interacts with the adapter protein MST50.

It catalyses the reaction L-seryl-[protein] + ATP = O-phospho-L-seryl-[protein] + ADP + H(+). It carries out the reaction L-threonyl-[protein] + ATP = O-phospho-L-threonyl-[protein] + ADP + H(+). Mitogen-activated protein kinase kinase; part of the MCK1-MKK2-MPS1 MAP kinase (MAPK) signal transduction cascade that is essential for appressorium formation, penetration and invasive growth. Beside its role in pathogenesis, the MPS1 cascade is active in conidiation and cellular stress responses. Targets downstream of the the MPS1-MAPK pathway include transcription factors MIG1 and SWI6, as well as GSK1 and MPG1. This is Mitogen-activated protein kinase kinae MKK2 from Pyricularia oryzae (strain 70-15 / ATCC MYA-4617 / FGSC 8958) (Rice blast fungus).